The following is a 211-amino-acid chain: GTP pyrophosphokinase YjbM (211 aa).

Guanosine 3'-diphosphate 5'-triphosphate-binding positions include 21–28, 41–42, and 46–48; these read KVKLKGIR, EF, and RVK. Residues 46-48, Ser52, 56-59, Asp72, and Arg77 contribute to the ATP site; these read RVK and KARR. Position 59 (Arg59) interacts with guanosine 3'-diphosphate 5'-triphosphate. Asp72 provides a ligand contact to Mg(2+). Guanosine 3'-diphosphate 5'-triphosphate contacts are provided by residues Arg105, 112–114, and His120; that span reads KES. Glu139 functions as the Proton acceptor in the catalytic mechanism. Residues Asn148 and 151 to 155 contribute to the guanosine 3'-diphosphate 5'-triphosphate site; that span reads ATIEH.

Belongs to the RelA/SpoT family. In terms of assembly, homotetramer.

It carries out the reaction GTP + ATP = guanosine 3'-diphosphate 5'-triphosphate + AMP. The enzyme catalyses GDP + ATP = guanosine 3',5'-bis(diphosphate) + AMP. Its pathway is purine metabolism; ppGpp biosynthesis; ppGpp from GTP: step 1/2. Its activity is regulated as follows. Allosterically regulated by its own products; pppGpp simulates synthesis 10-fold more than ppGpp. 2 pppGpp molecules bind in a regulatory cleft in the middle of the tetramer in an asymmetric manner. There is a specific contact of Lys-25 to the gamma-phosphate of pppGpp, explaining why pppGpp stimulates activity but ppGpp does not. Functions as a (p)ppGpp synthase; GDP can be used instead of GTP, resulting in an increase of (p)ppGpp synthesis. The enzyme binds ATP, then GDP or GTP and catalysis is highly cooperative. In eubacteria ppGpp (guanosine 3'-diphosphate 5'-diphosphate) is a mediator of the stringent response that coordinates a variety of cellular activities in response to changes in nutritional abundance. Probably has a minor role in the stringent response. The sequence is that of GTP pyrophosphokinase YjbM (yjbM) from Bacillus subtilis (strain 168).